Consider the following 222-residue polypeptide: N-(5'-phosphoribosyl)anthranilate isomerase (222 aa).

This sequence belongs to the TrpF family.

The enzyme catalyses N-(5-phospho-beta-D-ribosyl)anthranilate = 1-(2-carboxyphenylamino)-1-deoxy-D-ribulose 5-phosphate. The protein operates within amino-acid biosynthesis; L-tryptophan biosynthesis; L-tryptophan from chorismate: step 3/5. This chain is N-(5'-phosphoribosyl)anthranilate isomerase, found in Rhizobium rhizogenes (strain K84 / ATCC BAA-868) (Agrobacterium radiobacter).